The chain runs to 216 residues: Cytochrome c biogenesis ATP-binding export protein CcmA (216 aa).

Residues 11-216 (VSASKLTCIR…RKIRLDYRFV (206 aa)) enclose the ABC transporter domain. 43 to 50 (GPNGAGKT) provides a ligand contact to ATP.

This sequence belongs to the ABC transporter superfamily. CcmA exporter (TC 3.A.1.107) family. The complex is composed of two ATP-binding proteins (CcmA) and two transmembrane proteins (CcmB).

It localises to the cell inner membrane. It carries out the reaction heme b(in) + ATP + H2O = heme b(out) + ADP + phosphate + H(+). Part of the ABC transporter complex CcmAB involved in the biogenesis of c-type cytochromes; once thought to export heme, this seems not to be the case, but its exact role is uncertain. Responsible for energy coupling to the transport system. The polypeptide is Cytochrome c biogenesis ATP-binding export protein CcmA (Shewanella sp. (strain MR-4)).